The primary structure comprises 221 residues: 3-dehydroquinate dehydratase (221 aa).

3-dehydroquinate is bound by residues 33-35 (EIR) and Arg-63. Residue His-118 is the Proton donor/acceptor of the active site. Catalysis depends on Lys-144, which acts as the Schiff-base intermediate with substrate. Arg-181, Thr-200, and Gln-204 together coordinate 3-dehydroquinate.

It belongs to the type-I 3-dehydroquinase family. In terms of assembly, homodimer.

It catalyses the reaction 3-dehydroquinate = 3-dehydroshikimate + H2O. The protein operates within metabolic intermediate biosynthesis; chorismate biosynthesis; chorismate from D-erythrose 4-phosphate and phosphoenolpyruvate: step 3/7. Involved in the third step of the chorismate pathway, which leads to the biosynthesis of aromatic amino acids. Catalyzes the cis-dehydration of 3-dehydroquinate (DHQ) and introduces the first double bond of the aromatic ring to yield 3-dehydroshikimate. The chain is 3-dehydroquinate dehydratase from Methanothermobacter thermautotrophicus (strain ATCC 29096 / DSM 1053 / JCM 10044 / NBRC 100330 / Delta H) (Methanobacterium thermoautotrophicum).